Here is a 595-residue protein sequence, read N- to C-terminus: Estrogen receptor (595 aa).

The interval methionine 1–tyrosine 184 is modulating (transactivation AF-1); mediates interaction with MACROD1. Serine 10 is a glycosylation site (O-linked (GlcNAc) serine). Residues leucine 35 to serine 47 are required for interaction with NCOA1. The interval leucine 35–methionine 174 is interaction with DDX5; self-association. A phosphoserine; by CDK2 mark is found at serine 104 and serine 106. A Phosphoserine modification is found at serine 118. A disordered region spans residues alanine 144–methionine 174. Positions serine 154–leucine 165 are enriched in basic and acidic residues. Serine 167 is subject to Phosphoserine; by CK2. NR C4-type zinc fingers lie at residues cysteine 185–cysteine 205 and cysteine 221–cysteine 245. Residues cysteine 185–methionine 250 constitute a DNA-binding region (nuclear receptor). Positions cysteine 185–leucine 310 are mediates interaction with DNTTIP2. Residues methionine 251–leucine 310 are hinge. Basic residues predominate over residues lysine 257–arginine 269. The interval lysine 257–serine 288 is disordered. An Asymmetric dimethylarginine; by PRMT1 modification is found at arginine 260. Residues glycine 262–isoleucine 595 form an interaction with AKAP13 region. Residues methionine 264 to threonine 594 form a self-association region. The NR LBD domain occupies threonine 311–histidine 547. The segment at threonine 311–threonine 594 is transactivation AF-2. 17beta-estradiol-binding residues include glutamate 353 and arginine 394. Cysteine 447 carries S-palmitoyl cysteine lipidation. Histidine 524 serves as a coordination point for 17beta-estradiol. Tyrosine 537 bears the Phosphotyrosine; by Tyr-kinases mark. The disordered stretch occupies residues alanine 551–proline 575. A compositionally biased stretch (polar residues) spans methionine 563 to proline 575.

Belongs to the nuclear hormone receptor family. NR3 subfamily. As to quaternary structure, binds DNA as a homodimer. Can form a heterodimer with ESR2. Interacts with coactivator NCOA5. Interacts with PELP1, the interaction is enhanced by 17-beta-estradiol; the interaction increases ESR1 transcriptional activity. Interacts with NCOA7; the interaction is ligand-inducible. Interacts with AKAP13, CUEDC2, HEXIM1, KDM5A, MAP1S, SMARD1, and UBE1C. Interacts with MUC1; the interaction is stimulated by 7 beta-estradiol (E2) and enhances ESR1-mediated transcription. Interacts with DNTTIP2, and UIMC1. Interacts with KMT2D/MLL2. Interacts with ATAD2; the interaction is enhanced by estradiol. Interacts with KIF18A and LDB1. Interacts with RLIM (via its C-terminus). Interacts with MACROD1. Interacts with SH2D4A and PLCG. Interacts with SH2D4A; the interaction blocks binding to PLCG and inhibits estrogen-induced cell proliferation. Interacts with DYNLL1. Interacts with CCDC62; the interaction requires estradiol and appears to enhance the transcription of target genes. Interacts with NR2C1; the interaction prevents homodimerization of ESR1 and suppresses its transcriptional activity and cell growth. Interacts with DNAAF4. Interacts with PRMT2. Interacts with RBFOX2. Interacts with EP300; the interaction is estrogen-dependent and enhanced by CITED1. Interacts with CITED1; the interaction is estrogen-dependent. Interacts with FAM120B, FOXL2, PHB2 and SLC30A9. Interacts with coactivators NCOA3 and NCOA6. Interacts with STK3/MST2 only in the presence of SAV1 and vice-versa. Binds to CSNK1D. Interacts with NCOA2; NCOA2 can interact with ESR1 AF-1 and AF-2 domains simultaneously and mediate their transcriptional synergy. Interacts with DDX5. Interacts with NCOA1; the interaction seems to require a self-association of N-terminal and C-terminal regions. Interacts with ZNF366, DDX17, NFKB1, RELA, SP1 and SP3. Interacts with NRIP1. Interacts with GPER1; the interaction occurs in an estrogen-dependent manner. Interacts with CLOCK and the interaction is stimulated by estrogen. Interacts with TRIP4 (ufmylated); estrogen dependent. Interacts with LMTK3; the interaction phosphorylates ESR1 (in vitro) and protects it against proteasomal degradation. Interacts with CCAR2 (via N-terminus) in a ligand-independent manner. Interacts with ZFHX3. Interacts with SFR1 in a ligand-dependent and -independent manner. Interacts with DCAF13, LATS1 and DCAF1; regulates ESR1 ubiquitination and ubiquitin-mediated proteasomal degradation. Interacts (via DNA-binding domain) with POU4F2 (C-terminus); this interaction increases the estrogen receptor ESR1 transcriptional activity in a DNA- and ligand 17-beta-estradiol-independent manner. Interacts with ESRRB isoform 1. Interacts with UBE3A and WBP2. Interacts with GTF2B. Interacts with RBM39. In the absence of hormonal ligand, interacts with TACC1. Interacts with PI3KR1 or PI3KR2 and PTK2/FAK1. Interacts with SRC. Interacts with BAG1; the interaction is promoted in the absence of estradiol (17-beta-estradiol/E2). Interacts with and ubiquitinated by STUB1; the interaction is promoted in the absence of estradiol (17-beta-estradiol/E2). Interacts with NEDD8. In terms of processing, phosphorylated by cyclin A/CDK2 and CK1. Phosphorylation probably enhances transcriptional activity. Dephosphorylation at Ser-118 by PPP5C inhibits its transactivation activity. Phosphorylated by LMTK3 (in vitro). Ubiquitinated; regulated by LATS1 via DCAF1 it leads to ESR1 proteasomal degradation. Deubiquitinated by OTUB1. Ubiquitinated by STUB1/CHIP; in the CA1 hippocampal region following loss of endogenous circulating estradiol (17-beta-estradiol/E2). Ubiquitinated by UBR5, leading to its degradation: UBR5 specifically recognizes and binds ligand-bound ESR1 when it is not associated with coactivators (NCOAs). In presence of NCOAs, the UBR5-degron is not accessible, preventing its ubiquitination and degradation. Post-translationally, palmitoylated at Cys-447 by ZDHHC7 and ZDHHC21. Palmitoylation is required for plasma membrane targeting and for rapid intracellular signaling via ERK and AKT kinases and cAMP generation, but not for signaling mediated by the nuclear hormone receptor. In terms of processing, dimethylated by PRMT1 at Arg-260. The methylation may favor cytoplasmic localization. Demethylated by JMJD6 at Arg-260.

It localises to the nucleus. The protein localises to the cytoplasm. The protein resides in the golgi apparatus. It is found in the cell membrane. Its function is as follows. Nuclear hormone receptor. The steroid hormones and their receptors are involved in the regulation of eukaryotic gene expression and affect cellular proliferation and differentiation in target tissues. Ligand-dependent nuclear transactivation involves either direct homodimer binding to a palindromic estrogen response element (ERE) sequence or association with other DNA-binding transcription factors, such as AP-1/c-Jun, c-Fos, ATF-2, Sp1 and Sp3, to mediate ERE-independent signaling. Ligand binding induces a conformational change allowing subsequent or combinatorial association with multiprotein coactivator complexes through LXXLL motifs of their respective components. Mutual transrepression occurs between the estrogen receptor (ER) and NF-kappa-B in a cell-type specific manner. Decreases NF-kappa-B DNA-binding activity and inhibits NF-kappa-B-mediated transcription from the IL6 promoter and displace RELA/p65 and associated coregulators from the promoter. Recruited to the NF-kappa-B response element of the CCL2 and IL8 promoters and can displace CREBBP. Present with NF-kappa-B components RELA/p65 and NFKB1/p50 on ERE sequences. Can also act synergistically with NF-kappa-B to activate transcription involving respective recruitment adjacent response elements; the function involves CREBBP. Can activate the transcriptional activity of TFF1. Also mediates membrane-initiated estrogen signaling involving various kinase cascades. Essential for MTA1-mediated transcriptional regulation of BRCA1 and BCAS3. Maintains neuronal survival in response to ischemic reperfusion injury when in the presence of circulating estradiol (17-beta-estradiol/E2). This chain is Estrogen receptor (ESR1), found in Sus scrofa (Pig).